The sequence spans 408 residues: MRAKISSQAAVAIFLALVTCCLGTVIKGLGVSGVFEDTLVVFEKVETEDVGARLVFLGDQRPKNPYGGTVRVLFQPGESGTCSIPLLQVRYSNCTNTSAAVFSGCYRTDTEFSVPRANRGTSPGFVSLRTPTMLDSGDIYVTVHLDHLPRPDAFRIKFVSLYTGNETVRISTKDRAGRDRDSYGGASSPVGGRDSNRRTASRNDDGDLPLALYGPCRPCGKNCKNLREYLLTEESWHEWTSVFAPTTVAPTTTVATTAMRSTTVSFATMTAEVITSTGTVSMEPHNTTTADMVNLTAADPPPSEPVPALNALAIGLVVGGTVASLVFLSVILGGLISCCARRRSARRLLTRSNSAREMEDLAPSSEDARTSRMSPDVVELSELVNGAPLSHRNDIGGDDLTSISSASG.

The signal sequence occupies residues 1–23 (MRAKISSQAAVAIFLALVTCCLG). At 24–311 (TVIKGLGVSG…PSEPVPALNA (288 aa)) the chain is on the virion surface side. N-linked (GlcNAc...) asparagine; by host glycosylation is found at Asn93, Asn96, and Asn165. Composition is skewed to basic and acidic residues over residues 172–182 (TKDRAGRDRDS) and 194–205 (DSNRRTASRNDD). The interval 172-207 (TKDRAGRDRDSYGGASSPVGGRDSNRRTASRNDDGD) is disordered. Asn286 and Asn294 each carry an N-linked (GlcNAc...) asparagine; by host glycan. The helical transmembrane segment at 312 to 332 (LAIGLVVGGTVASLVFLSVIL) threads the bilayer. Residues 333 to 408 (GGLISCCARR…DLTSISSASG (76 aa)) lie on the Intravirion side of the membrane. Disordered regions lie at residues 357 to 376 (EMED…MSPD) and 388 to 408 (PLSH…SASG).

Belongs to the alphaherpesvirinae glycoprotein I family. In terms of assembly, interacts with gE.

It is found in the virion membrane. Its subcellular location is the host cell membrane. It localises to the host cell junction. The protein localises to the host Golgi apparatus membrane. Functionally, in epithelial cells, the heterodimer gE/gI is required for the cell-to-cell spread of the virus, by sorting nascent virions to cell junctions. Once the virus reaches the cell junctions, virus particles can spread to adjacent cells extremely rapidly through interactions with cellular receptors that accumulate at these junctions. Implicated in basolateral spread in polarized cells. In neuronal cells, gE/gI is essential for the anterograde spread of the infection throughout the host nervous system. Together with US9, the heterodimer gE/gI is involved in the sorting and transport of viral structural components toward axon tips. This is Envelope glycoprotein I (gI) from Psittacid herpesvirus 1 (isolate Amazon parrot/-/97-0001/1997) (PsHV-1).